Reading from the N-terminus, the 37-residue chain is Large ribosomal subunit protein bL36 (37 aa).

The protein belongs to the bacterial ribosomal protein bL36 family.

The protein is Large ribosomal subunit protein bL36 of Trichlorobacter lovleyi (strain ATCC BAA-1151 / DSM 17278 / SZ) (Geobacter lovleyi).